The primary structure comprises 197 residues: Nucleoside triphosphate pyrophosphatase (197 aa).

Asp72 serves as the catalytic Proton acceptor.

This sequence belongs to the Maf family. It depends on a divalent metal cation as a cofactor.

It is found in the cytoplasm. The catalysed reaction is a ribonucleoside 5'-triphosphate + H2O = a ribonucleoside 5'-phosphate + diphosphate + H(+). The enzyme catalyses a 2'-deoxyribonucleoside 5'-triphosphate + H2O = a 2'-deoxyribonucleoside 5'-phosphate + diphosphate + H(+). Nucleoside triphosphate pyrophosphatase. May have a dual role in cell division arrest and in preventing the incorporation of modified nucleotides into cellular nucleic acids. This is Nucleoside triphosphate pyrophosphatase from Corynebacterium efficiens (strain DSM 44549 / YS-314 / AJ 12310 / JCM 11189 / NBRC 100395).